We begin with the raw amino-acid sequence, 439 residues long: Homogentisate 1,2-dioxygenase (439 aa).

His-293 serves as the catalytic Proton acceptor. Fe cation-binding residues include His-336 and Glu-342. The homogentisate site is built by Tyr-351 and His-372. His-372 contacts Fe cation.

This sequence belongs to the homogentisate dioxygenase family. Hexamer; dimer of trimers. Fe cation serves as cofactor.

It catalyses the reaction homogentisate + O2 = 4-maleylacetoacetate + H(+). The protein operates within amino-acid degradation; L-phenylalanine degradation; acetoacetate and fumarate from L-phenylalanine: step 4/6. Its function is as follows. Involved in the catabolism of homogentisate (2,5-dihydroxyphenylacetate or 2,5-OH-PhAc), a central intermediate in the degradation of phenylalanine and tyrosine. Catalyzes the oxidative ring cleavage of the aromatic ring of homogentisate to yield maleylacetoacetate. The polypeptide is Homogentisate 1,2-dioxygenase (Cupriavidus pinatubonensis (strain JMP 134 / LMG 1197) (Cupriavidus necator (strain JMP 134))).